We begin with the raw amino-acid sequence, 434 residues long: UDP-N-acetylmuramate--L-alanine ligase (434 aa).

110 to 116 contributes to the ATP binding site; sequence GAHGKTS.

This sequence belongs to the MurCDEF family.

The protein localises to the cytoplasm. It carries out the reaction UDP-N-acetyl-alpha-D-muramate + L-alanine + ATP = UDP-N-acetyl-alpha-D-muramoyl-L-alanine + ADP + phosphate + H(+). Its pathway is cell wall biogenesis; peptidoglycan biosynthesis. Its function is as follows. Cell wall formation. The polypeptide is UDP-N-acetylmuramate--L-alanine ligase (Limosilactobacillus reuteri (strain DSM 20016) (Lactobacillus reuteri)).